A 257-amino-acid chain; its full sequence is Asnovolin H dehydrogenase nvfC (257 aa).

Residues 7–26 traverse the membrane as a helical segment; that stretch reads YVLIITGSASGIGLATATIA. Isoleucine 11 is a binding site for NADP(+). 3 N-linked (GlcNAc...) asparagine glycosylation sites follow: asparagine 57, asparagine 92, and asparagine 110. NADP(+) is bound by residues arginine 119, tyrosine 151, lysine 155, and valine 184. The active-site Proton donor is tyrosine 151. Residue lysine 155 is the Lowers pKa of active site Tyr of the active site.

It belongs to the short-chain dehydrogenases/reductases (SDR) family.

The protein localises to the membrane. It catalyses the reaction asnovolin H + A = chermesin D + AH2. Its pathway is secondary metabolite biosynthesis; terpenoid biosynthesis. In terms of biological role, short chain dehydrogenase; part of the gene cluster that mediates the biosynthesis of novofumigatonin, a heavily oxygenated meroterpenoid containing a unique orthoester moiety. The first step of the pathway is the synthesis of 3,5-dimethylorsellinic acid (DMOA) by the polyketide synthase nvfA via condensation of one acetyl-CoA starter unit with 3 malonyl-CoA units and 2 methylations. DMOA is then converted to farnesyl-DMOA by the farnesyltransferase nvfB. Epoxydation by FAD-dependent monooxygenase nvfK, followed by a protonation-initiated cyclization catalyzed by the terpene cyclase nvfL leads to the production of asnavolin H. The short chain dehydrogenase nvfC then as a 3-OH dehydrogenase of asnovolin H to yield chemesin D. There are two branches to synthesize asnovolin A from chemesin D. In one branch, chemesin D undergoes Baeyer-Villiger oxidation by nvfH, methylation by nvfJ, and enoyl reduction by the nvfM D enoylreductase that reduces the double bond between C-5'and C-6', to form respectively asnovolin I, asnovolin K, and asnovolin A. In the other branch, the methylation precedes the Baeyer-Villiger oxidation and the enoyl reduction to yield asnovolin A via the asnovolin J intermediate. Asnovolin A is further converted to fumigatonoid A by the Fe(II)/2-oxoglutarate-dependent dioxygenase nvfI that catalyzes an endoperoxidation reaction. The alpha/beta hydrolase nvfD then acts as an epimerase that converts fumigatonoid A to its C-5' epimer, which then undergoes spontaneous or nvfD-catalyzed lactonization. The following step utilizes the ketoreductase nvfG to produce fumigatonoid B. The dioxygenase nvfE further converts fumigatonoid B into fumigatonoid C. Finally the Fe(II)/2-oxoglutarate-dependent dioxygenase nvfF catalyzes two rounds of oxidation to transform fumigatonoid C into the end product, novofumigatonin A. The polypeptide is Asnovolin H dehydrogenase nvfC (Aspergillus novofumigatus (strain IBT 16806)).